Reading from the N-terminus, the 2273-residue chain is Acetyl-CoA carboxylase, mitochondrial (2273 aa).

The N-terminal 104 residues, 1–104 (KGKTITHGQS…RGNIHKHTRL (104 aa)), are a transit peptide targeting the mitochondrion. The 502-residue stretch at 134 to 635 (VISKILIANN…STGWLDDLIL (502 aa)) folds into the Biotin carboxylation domain. The ATP-grasp domain maps to 292-484 (KTNFVSVPDD…LPATQLQIAM (193 aa)). 332–337 (GGGGKG) lines the ATP pocket. Residue R459 is part of the active site. The region spanning 763-837 (LEAELNPTQV…EAGDVIAKLT (75 aa)) is the Biotinyl-binding domain. K804 carries the N6-biotinyllysine modification. In terms of domain architecture, CoA carboxyltransferase N-terminal spans 1532 to 1867 (PYSVKDWLQP…KRDMSPPLLE (336 aa)). The carboxyltransferase stretch occupies residues 1532–2187 (PYSVKDWLQP…EGQVIKRLQK (656 aa)). Positions 1776, 2080, and 2082 each coordinate CoA. In terms of domain architecture, CoA carboxyltransferase C-terminal spans 1871 to 2187 (RWDRDVDFKP…EGQVIKRLQK (317 aa)).

It depends on biotin as a cofactor.

It localises to the mitochondrion. The catalysed reaction is hydrogencarbonate + acetyl-CoA + ATP = malonyl-CoA + ADP + phosphate + H(+). The enzyme catalyses N(6)-biotinyl-L-lysyl-[protein] + hydrogencarbonate + ATP = N(6)-carboxybiotinyl-L-lysyl-[protein] + ADP + phosphate + H(+). The protein operates within lipid metabolism; malonyl-CoA biosynthesis; malonyl-CoA from acetyl-CoA: step 1/1. Its function is as follows. Catalyzes the rate-limiting reaction in the mitochondrial fatty acid synthesis (FAS) type II pathway. Responsible for the production of the mitochondrial malonyl-CoA, used for the biosynthesis of the cofactor lipoic acid. This protein carries three functions: biotin carboxyl carrier protein, biotin carboxylase, and carboxyltransferase. The protein is Acetyl-CoA carboxylase, mitochondrial (HFA1) of Saccharomyces cerevisiae (strain ATCC 204508 / S288c) (Baker's yeast).